The primary structure comprises 245 residues: uncharacterized protein (245 aa).

This is an uncharacterized protein from Rhodobacter capsulatus (Rhodopseudomonas capsulata).